Reading from the N-terminus, the 381-residue chain is tRNA pseudouridine synthase D (381 aa).

The active-site Nucleophile is the Asp81. The region spanning 160–335 is the TRUD domain; sequence GMPNYFGSQR…TLGSRRFFWV (176 aa).

This sequence belongs to the pseudouridine synthase TruD family.

The catalysed reaction is uridine(13) in tRNA = pseudouridine(13) in tRNA. In terms of biological role, responsible for synthesis of pseudouridine from uracil-13 in transfer RNAs. The polypeptide is tRNA pseudouridine synthase D (Helicobacter pylori (strain P12)).